A 133-amino-acid chain; its full sequence is uncharacterized protein (133 aa).

The HIT domain occupies 3–106; it reads IFTKIINREL…PTRSLSDFGF (104 aa). The short motif at 90-94 is the Histidine triad motif element; that stretch reads HLHIH.

This is an uncharacterized protein from Mycobacterium tuberculosis (strain ATCC 25618 / H37Rv).